Reading from the N-terminus, the 149-residue chain is MKARHKRLGLIVAGLAALGLGAALVLSAFQKNLVFFFTPSQVAAGEAPRNRSFRVGGMVEVGSIERQADGVTVSFLVTDTAQRLRVNYRGSLPDLFKEGKGVVAQGKLTADQLFVADEVLAKHDENYMPPEAAYALKQAGAPALAGALK.

Residues 1 to 7 (MKARHKR) are Cytoplasmic-facing. The chain crosses the membrane as a helical; Signal-anchor for type II membrane protein span at residues 8 to 28 (LGLIVAGLAALGLGAALVLSA). Residues 29-149 (FQKNLVFFFT…GAPALAGALK (121 aa)) are Periplasmic-facing. Heme is bound by residues histidine 123 and tyrosine 127.

This sequence belongs to the CcmE/CycJ family.

It is found in the cell inner membrane. In terms of biological role, heme chaperone required for the biogenesis of c-type cytochromes. Transiently binds heme delivered by CcmC and transfers the heme to apo-cytochromes in a process facilitated by CcmF and CcmH. This chain is Cytochrome c-type biogenesis protein CcmE, found in Polaromonas naphthalenivorans (strain CJ2).